A 117-amino-acid chain; its full sequence is MEAIRQLEKEHMRLDLPDFSSGDSVKVHVKIKEGEKERIQVFEGVVLKRHNGSKSTAATFTVRKTSFGIGVERIFPLHSPSIDRIEVVKRGLVRQSRIYYFRKLTGKAAKIREKRDR.

This sequence belongs to the bacterial ribosomal protein bL19 family.

This protein is located at the 30S-50S ribosomal subunit interface and may play a role in the structure and function of the aminoacyl-tRNA binding site. The protein is Large ribosomal subunit protein bL19 of Desulfosudis oleivorans (strain DSM 6200 / JCM 39069 / Hxd3) (Desulfococcus oleovorans).